Reading from the N-terminus, the 291-residue chain is Undecaprenyl-diphosphatase (291 aa).

The next 8 helical transmembrane spans lie at 1–21 (MFIIELIKGIILGVVEGLTEF), 48–68 (SAFTFKIVIQLGSVFAAAWVF), 102–122 (LHVLVGMVPAGILGLLFDDFI), 126–146 (LFSVPTVMIGLFVGAIYMIIA), 162–182 (ISYFQAFVIGISQAVAMWPGF), 203–223 (SDFTFIMAVPIMLAASGLSLL), 231–251 (IADIPFYILGFLAAFTVGLIA), and 267–287 (FAIYRIVLVIFIAILYFGFGI).

It belongs to the UppP family.

It localises to the cell membrane. It catalyses the reaction di-trans,octa-cis-undecaprenyl diphosphate + H2O = di-trans,octa-cis-undecaprenyl phosphate + phosphate + H(+). Catalyzes the dephosphorylation of undecaprenyl diphosphate (UPP). Confers resistance to bacitracin. The protein is Undecaprenyl-diphosphatase of Staphylococcus aureus (strain USA300).